A 488-amino-acid chain; its full sequence is Germacrene A hydroxylase (488 aa).

The Cytoplasmic portion of the chain corresponds to 1–6; sequence MELSIT. A helical; Signal-anchor for type II membrane protein transmembrane segment spans residues 7 to 23; that stretch reads TSIALATIVFFLYKLAT. At 24–488 the chain is on the lumenal side; the sequence is RPKSTKKQLP…KTELLLVPSF (465 aa). N-linked (GlcNAc...) asparagine glycosylation is found at N169, N260, and N379. A heme-binding site is contributed by C432.

The protein belongs to the cytochrome P450 family. Requires heme as cofactor.

The protein resides in the endoplasmic reticulum membrane. The enzyme catalyses (+)-(R)-germacrene A + 3 reduced [NADPH--hemoprotein reductase] + 3 O2 = germacra-1(10),4,11(13)-trien-12-oate + 3 oxidized [NADPH--hemoprotein reductase] + 4 H2O + 4 H(+). Its pathway is secondary metabolite biosynthesis; terpenoid biosynthesis. Functionally, involved in the biosynthesis of germacrene-derived sesquiterpene lactones. Catalyzes three consecutive oxidations of germacrene A to produce germacrene A acid. Could also catalyze the three-step oxidation of non-natural substrate amorphadiene to artemisinic acid. The protein is Germacrene A hydroxylase of Lactuca sativa (Garden lettuce).